A 463-amino-acid chain; its full sequence is Serine/threonine-protein kinase sgk-1 (463 aa).

The Protein kinase domain occupies 135–392 (FDYLTTIGKG…FRDIRDHPFF (258 aa)). ATP contacts are provided by residues 141–149 (IGKGSFGRV) and Lys-164. Catalysis depends on Asp-259, which acts as the Proton acceptor. The region spanning 393-463 (LPVDWDKLLN…TFVDTNRVLV (71 aa)) is the AGC-kinase C-terminal domain.

The protein belongs to the protein kinase superfamily. AGC Ser/Thr protein kinase family. Interacts with pdk-1, akt-1, akt-2 and daf-16. Part of a complex containing sgk-1, akt-1 and akt-2. Interacts with let-92 phosphatase regulatory subunit pptr-1. Requires Mg(2+) as cofactor. As to expression, expressed in late embryos just before hatching. At postembryonic stages, expressed in sensory and motor neurons and in the intestine. Highly expressed in the intestine and head and tail neurons.

Its subcellular location is the cytoplasm. The protein resides in the nucleus. It localises to the apical cell membrane. The catalysed reaction is L-seryl-[protein] + ATP = O-phospho-L-seryl-[protein] + ADP + H(+). The enzyme catalyses L-threonyl-[protein] + ATP = O-phospho-L-threonyl-[protein] + ADP + H(+). Phosphorylated and activated by pdk-1. Its function is as follows. Acts downstream of PI3 kinase age-1 and kinase pdk-1 in the daf-2/insulin receptor-like transduction pathway. Essential role in regulating development, stress response, and longevity. Phosphorylates Forkhead-related daf-16 and the longevity-promoting skn-1 transcription factors, which inhibits their entry into the nucleus and antagonizes their function. Promotes the cytoplasmic localization of the transcription factor pqm-1. Plays a role in the intracellular trafficking of proteins such as mig-14 to the cell membrane, and this may be through positively regulating ceramide synthesis. Acts downstream of rict-1 to regulate fat storage, size, development and vitellogenesis. Downstream of age-1 and together with akt-1/2, promotes cell survival during embryonic development. Plays a role in maintaining the gonadal basement membrane through antagonizing akt-1 activity. Does not appear to play a role in immune function. The chain is Serine/threonine-protein kinase sgk-1 from Caenorhabditis elegans.